The chain runs to 151 residues: Phosphoribosyl-AMP cyclohydrolase (151 aa).

Residue D94 coordinates Mg(2+). Position 95 (C95) interacts with Zn(2+). The Mg(2+) site is built by D96 and D98. 2 residues coordinate Zn(2+): C112 and C119.

It belongs to the PRA-CH family. In terms of assembly, homodimer. The cofactor is Mg(2+). It depends on Zn(2+) as a cofactor.

Its subcellular location is the cytoplasm. The enzyme catalyses 1-(5-phospho-beta-D-ribosyl)-5'-AMP + H2O = 1-(5-phospho-beta-D-ribosyl)-5-[(5-phospho-beta-D-ribosylamino)methylideneamino]imidazole-4-carboxamide. It functions in the pathway amino-acid biosynthesis; L-histidine biosynthesis; L-histidine from 5-phospho-alpha-D-ribose 1-diphosphate: step 3/9. Catalyzes the hydrolysis of the adenine ring of phosphoribosyl-AMP. The sequence is that of Phosphoribosyl-AMP cyclohydrolase from Rhodopseudomonas palustris (strain ATCC BAA-98 / CGA009).